The following is a 203-amino-acid chain: Urease accessory protein UreG (203 aa).

14–21 (GPVGAGKT) is a GTP binding site.

This sequence belongs to the SIMIBI class G3E GTPase family. UreG subfamily. As to quaternary structure, homodimer. UreD, UreF and UreG form a complex that acts as a GTP-hydrolysis-dependent molecular chaperone, activating the urease apoprotein by helping to assemble the nickel containing metallocenter of UreC. The UreE protein probably delivers the nickel.

The protein resides in the cytoplasm. Functionally, facilitates the functional incorporation of the urease nickel metallocenter. This process requires GTP hydrolysis, probably effectuated by UreG. In Jannaschia sp. (strain CCS1), this protein is Urease accessory protein UreG.